The sequence spans 154 residues: Leghemoglobin-2 (154 aa).

Residues 3-151 (ALTESQAALV…LAIVIKKEMN (149 aa)) form the Globin domain. Ser-46 provides a ligand contact to heme b. Position 46 is a phosphoserine (Ser-46). His-64 provides a ligand contact to O2. Residues Lys-67, His-98, and Lys-101 each coordinate heme b. Position 139 is a nitrated tyrosine (Tyr-139).

It belongs to the plant globin family. In terms of assembly, monomer. Post-translationally, nitrated in effective nodules and particularly in hypoxic conditions; this mechanism may play a protective role in the symbiosis by buffering toxic peroxynitrite NO(2)(-). Nitration level decrease during nodule senescence. Phosphorylation at Ser-46 disrupts the molecular environment of its porphyrin ring oxygen binding pocket, thus leading to a reduced oxygen consumption and to the delivery of oxygen O(2) to symbiosomes. In terms of tissue distribution, root nodules.

The protein resides in the cytoplasm. The protein localises to the cytosol. Its subcellular location is the nucleus. Functionally, leghemoglobin that reversibly binds oxygen O(2) through a pentacoordinated heme iron. In root nodules, facilitates the diffusion of oxygen to the bacteroids while preventing the bacterial nitrogenase from being inactivated by buffering dioxygen, nitric oxide and carbon monoxide, and promoting the formation of reactive oxygen species (ROS, e.g. H(2)O(2)). This role is essential for symbiotic nitrogen fixation (SNF). This is Leghemoglobin-2 from Lupinus luteus (European yellow lupine).